The sequence spans 229 residues: UPF0758 protein Caur_3603 (229 aa).

Residues 105-227 enclose the MPN domain; it reads PIRSPADVAT…YVSLRERGLG (123 aa). The Zn(2+) site is built by histidine 176, histidine 178, and aspartate 189. The short motif at 176 to 189 is the JAMM motif element; it reads HNHPSGEPTPSMED.

The protein belongs to the UPF0758 family.

The protein is UPF0758 protein Caur_3603 of Chloroflexus aurantiacus (strain ATCC 29366 / DSM 635 / J-10-fl).